The sequence spans 464 residues: tRNA-2-methylthio-N(6)-dimethylallyladenosine synthase (464 aa).

Residues 19 to 135 (GSYWITTFGC…LENLLGKVDL (117 aa)) enclose the MTTase N-terminal domain. [4Fe-4S] cluster contacts are provided by Cys-28, Cys-64, Cys-98, Cys-170, Cys-174, and Cys-177. One can recognise a Radical SAM core domain in the interval 156 to 393 (RESSICGWVN…NELVETTSKQ (238 aa)). Residues 396-464 (ERYLDSIESV…PFSLTGILCL (69 aa)) enclose the TRAM domain.

This sequence belongs to the methylthiotransferase family. MiaB subfamily. Monomer. [4Fe-4S] cluster is required as a cofactor.

It localises to the cytoplasm. The enzyme catalyses N(6)-dimethylallyladenosine(37) in tRNA + (sulfur carrier)-SH + AH2 + 2 S-adenosyl-L-methionine = 2-methylsulfanyl-N(6)-dimethylallyladenosine(37) in tRNA + (sulfur carrier)-H + 5'-deoxyadenosine + L-methionine + A + S-adenosyl-L-homocysteine + 2 H(+). Its function is as follows. Catalyzes the methylthiolation of N6-(dimethylallyl)adenosine (i(6)A), leading to the formation of 2-methylthio-N6-(dimethylallyl)adenosine (ms(2)i(6)A) at position 37 in tRNAs that read codons beginning with uridine. The protein is tRNA-2-methylthio-N(6)-dimethylallyladenosine synthase of Prochlorococcus marinus (strain MIT 9215).